The primary structure comprises 657 residues: tRNA uridine 5-carboxymethylaminomethyl modification enzyme MnmG (657 aa).

Residue 13 to 18 (GGGHAG) coordinates FAD. 281–295 (GPRYCPSVEDKINRF) contributes to the NAD(+) binding site.

The protein belongs to the MnmG family. In terms of assembly, homodimer. Heterotetramer of two MnmE and two MnmG subunits. FAD is required as a cofactor.

Its subcellular location is the cytoplasm. NAD-binding protein involved in the addition of a carboxymethylaminomethyl (cmnm) group at the wobble position (U34) of certain tRNAs, forming tRNA-cmnm(5)s(2)U34. The protein is tRNA uridine 5-carboxymethylaminomethyl modification enzyme MnmG of Acidovorax ebreus (strain TPSY) (Diaphorobacter sp. (strain TPSY)).